A 302-amino-acid chain; its full sequence is Sulfate adenylyltransferase subunit 2 2 (302 aa).

Belongs to the PAPS reductase family. CysD subfamily. As to quaternary structure, heterodimer composed of CysD, the smaller subunit, and CysN.

It catalyses the reaction sulfate + ATP + H(+) = adenosine 5'-phosphosulfate + diphosphate. Its pathway is sulfur metabolism; hydrogen sulfide biosynthesis; sulfite from sulfate: step 1/3. Functionally, with CysN forms the ATP sulfurylase (ATPS) that catalyzes the adenylation of sulfate producing adenosine 5'-phosphosulfate (APS) and diphosphate, the first enzymatic step in sulfur assimilation pathway. APS synthesis involves the formation of a high-energy phosphoric-sulfuric acid anhydride bond driven by GTP hydrolysis by CysN coupled to ATP hydrolysis by CysD. This is Sulfate adenylyltransferase subunit 2 2 from Alkalilimnicola ehrlichii (strain ATCC BAA-1101 / DSM 17681 / MLHE-1).